The chain runs to 556 residues: ATP synthase subunit alpha 2 (556 aa).

177 to 184 (GDRATGKT) contacts ATP. The disordered stretch occupies residues 514-556 (GGHAEDAADDMGGALDGEHASGDATSIAPTPPGGAEAGAPRKR). The span at 546-556 (GGAEAGAPRKR) shows a compositional bias: low complexity.

The protein belongs to the ATPase alpha/beta chains family. F-type ATPases have 2 components, CF(1) - the catalytic core - and CF(0) - the membrane proton channel. CF(1) has five subunits: alpha(3), beta(3), gamma(1), delta(1), epsilon(1). CF(0) has three main subunits: a(1), b(2) and c(9-12). The alpha and beta chains form an alternating ring which encloses part of the gamma chain. CF(1) is attached to CF(0) by a central stalk formed by the gamma and epsilon chains, while a peripheral stalk is formed by the delta and b chains.

The protein resides in the cell inner membrane. It carries out the reaction ATP + H2O + 4 H(+)(in) = ADP + phosphate + 5 H(+)(out). Functionally, produces ATP from ADP in the presence of a proton gradient across the membrane. The alpha chain is a regulatory subunit. The sequence is that of ATP synthase subunit alpha 2 from Burkholderia thailandensis (strain ATCC 700388 / DSM 13276 / CCUG 48851 / CIP 106301 / E264).